The chain runs to 338 residues: Methionine aminopeptidase 1D, mitochondrial (338 aa).

The N-terminal 47 residues, Met-1–Arg-47, are a transit peptide targeting the mitochondrion. His-164 lines the substrate pocket. A divalent metal cation contacts are provided by Asp-181, Asp-192, and His-255. A substrate-binding site is contributed by His-262. Residues Glu-287 and Glu-318 each coordinate a divalent metal cation.

The protein belongs to the peptidase M24A family. Methionine aminopeptidase type 1 subfamily. Co(2+) serves as cofactor. The cofactor is Zn(2+). Mn(2+) is required as a cofactor. Requires Fe(2+) as cofactor.

The protein resides in the mitochondrion. It carries out the reaction Release of N-terminal amino acids, preferentially methionine, from peptides and arylamides.. Its function is as follows. Removes the N-terminal methionine from nascent proteins. The N-terminal methionine is often cleaved when the second residue in the primary sequence is small and uncharged (Met-Ala-, Cys, Gly, Pro, Ser, Thr, or Val). Requires deformylation of the N(alpha)-formylated initiator methionine before it can be hydrolyzed. The chain is Methionine aminopeptidase 1D, mitochondrial (metap1d) from Danio rerio (Zebrafish).